We begin with the raw amino-acid sequence, 236 residues long: Uridylate kinase (236 aa).

Residue 10–13 (KLSG) participates in ATP binding. Position 52 (G52) interacts with UMP. ATP-binding residues include G53 and R57. UMP-binding positions include D72 and 133–140 (TGNPFFTT). Residues T160, Y166, and D169 each coordinate ATP.

Belongs to the UMP kinase family. Homohexamer.

Its subcellular location is the cytoplasm. The enzyme catalyses UMP + ATP = UDP + ADP. It participates in pyrimidine metabolism; CTP biosynthesis via de novo pathway; UDP from UMP (UMPK route): step 1/1. Its activity is regulated as follows. Inhibited by UTP. In terms of biological role, catalyzes the reversible phosphorylation of UMP to UDP. This chain is Uridylate kinase, found in Cupriavidus necator (strain ATCC 17699 / DSM 428 / KCTC 22496 / NCIMB 10442 / H16 / Stanier 337) (Ralstonia eutropha).